Here is a 765-residue protein sequence, read N- to C-terminus: Probable dipeptidyl peptidase 4 (765 aa).

Residues Met-1 to Ala-14 form the signal peptide. Asn-35, Asn-78, Asn-101, Asn-110, Asn-169, Asn-218, Asn-465, and Asn-490 each carry an N-linked (GlcNAc...) asparagine glycan. Ser-613 functions as the Charge relay system in the catalytic mechanism. Asn-665 carries N-linked (GlcNAc...) asparagine glycosylation. Active-site charge relay system residues include Asp-690 and His-725.

Belongs to the peptidase S9B family.

It is found in the secreted. It catalyses the reaction Release of an N-terminal dipeptide, Xaa-Yaa-|-Zaa-, from a polypeptide, preferentially when Yaa is Pro, provided Zaa is neither Pro nor hydroxyproline.. Functionally, extracellular dipeptidyl-peptidase which removes N-terminal dipeptides sequentially from polypeptides having unsubstituted N-termini provided that the penultimate residue is proline. Contributes to pathogenicity. The sequence is that of Probable dipeptidyl peptidase 4 (dpp4) from Aspergillus fumigatus (strain ATCC MYA-4609 / CBS 101355 / FGSC A1100 / Af293) (Neosartorya fumigata).